We begin with the raw amino-acid sequence, 489 residues long: UDP-glycosyltransferase 85A1 (489 aa).

Residues S307, 364 to 366, 381 to 389, and 403 to 406 each bind UDP-alpha-D-glucose; these read CPQ, HCGWNSILE, and FADQ.

This sequence belongs to the UDP-glycosyltransferase family. Expressed in root tips, lateral root initials, root apex, shoots, leaf periphery, leaf primordia and flowers.

Functionally, involved in the O-glucosylation of trans-zeatin and dihydrozeatin. Also active in vitro on cis-zeatin. Not active on N-glucosylated substrates. The sequence is that of UDP-glycosyltransferase 85A1 (UGT85A1) from Arabidopsis thaliana (Mouse-ear cress).